Consider the following 126-residue polypeptide: Glycine cleavage system H protein (126 aa).

One can recognise a Lipoyl-binding domain in the interval 22–104 (VATIGITEYA…YEKAWMVKVE (83 aa)). At Lys63 the chain carries N6-lipoyllysine.

This sequence belongs to the GcvH family. As to quaternary structure, the glycine cleavage system is composed of four proteins: P, T, L and H. (R)-lipoate serves as cofactor.

In terms of biological role, the glycine cleavage system catalyzes the degradation of glycine. The H protein shuttles the methylamine group of glycine from the P protein to the T protein. Its function is as follows. Is also involved in protein lipoylation via its role as an octanoyl/lipoyl carrier protein intermediate. This is Glycine cleavage system H protein from Staphylococcus aureus (strain JH1).